The chain runs to 235 residues: Coiled-coil domain-containing protein 71L (235 aa).

The segment covering 1 to 13 (MRRSMKRRRRRRP) has biased composition (basic residues). A disordered region spans residues 1-30 (MRRSMKRRRRRRPVAPATAARGGDFRAEDG). A phosphoserine mark is found at S52 and S89. Residues 109-167 (PDPPGPPTARGQARRPVPRAAARRRRRGARAAAARRRKPRPPPPPPPPPEESCPAKPVA) form a disordered region. Positions 120–148 (QARRPVPRAAARRRRRGARAAAARRRKPR) are enriched in basic residues. Pro residues predominate over residues 149–159 (PPPPPPPPPEE). T185 carries the post-translational modification Phosphothreonine. S198 carries the phosphoserine modification.

This Homo sapiens (Human) protein is Coiled-coil domain-containing protein 71L (CCDC71L).